Reading from the N-terminus, the 97-residue chain is Large ribosomal subunit protein bL21 (97 aa).

Belongs to the bacterial ribosomal protein bL21 family. As to quaternary structure, part of the 50S ribosomal subunit. Contacts protein L20.

This protein binds to 23S rRNA in the presence of protein L20. This is Large ribosomal subunit protein bL21 from Persephonella marina (strain DSM 14350 / EX-H1).